The chain runs to 261 residues: 3-deoxy-manno-octulosonate cytidylyltransferase (261 aa).

The protein belongs to the KdsB family.

It is found in the cytoplasm. It catalyses the reaction 3-deoxy-alpha-D-manno-oct-2-ulosonate + CTP = CMP-3-deoxy-beta-D-manno-octulosonate + diphosphate. It functions in the pathway nucleotide-sugar biosynthesis; CMP-3-deoxy-D-manno-octulosonate biosynthesis; CMP-3-deoxy-D-manno-octulosonate from 3-deoxy-D-manno-octulosonate and CTP: step 1/1. Its pathway is bacterial outer membrane biogenesis; lipopolysaccharide biosynthesis. Its function is as follows. Activates KDO (a required 8-carbon sugar) for incorporation into bacterial lipopolysaccharide in Gram-negative bacteria. The sequence is that of 3-deoxy-manno-octulosonate cytidylyltransferase from Marinobacter nauticus (strain ATCC 700491 / DSM 11845 / VT8) (Marinobacter aquaeolei).